We begin with the raw amino-acid sequence, 456 residues long: GPI-anchored protein 13 (456 aa).

The N-terminal stretch at 1–23 is a signal peptide; it reads MRSPSLAVAATTVLGLFSSSALA. N-linked (GlcNAc...) asparagine glycosylation is present at asparagine 27. A lipid anchor (GPI-anchor amidated glycine) is attached at glycine 433. Positions 434–456 are cleaved as a propeptide — removed in mature form; it reads AAAVNVVPTTAFGLFAIILASIF.

In terms of processing, the GPI-anchor is attached to the protein in the endoplasmic reticulum and serves to target the protein to the cell surface. There, the glucosamine-inositol phospholipid moiety is cleaved off and the GPI-modified mannoprotein is covalently attached via its lipidless GPI glycan remnant to the 1,6-beta-glucan of the outer cell wall layer.

Its subcellular location is the secreted. The protein resides in the cell wall. It is found in the membrane. In terms of biological role, cell wall protein which contributes to cell wall synthesis and is important for acquiring normal surface properties. Required for virulence in a mouse infection model. In Candida albicans (strain SC5314 / ATCC MYA-2876) (Yeast), this protein is GPI-anchored protein 13 (PGA13).